The following is a 763-amino-acid chain: DNA polymerase 3 (763 aa).

The protein belongs to the DNA polymerase type-B family.

It catalyses the reaction DNA(n) + a 2'-deoxyribonucleoside 5'-triphosphate = DNA(n+1) + diphosphate. This Saccharolobus shibatae (strain ATCC 51178 / DSM 5389 / JCM 8931 / NBRC 15437 / B12) (Sulfolobus shibatae) protein is DNA polymerase 3 (dpo3).